Reading from the N-terminus, the 280-residue chain is 4-hydroxy-tetrahydrodipicolinate reductase (280 aa).

NAD(+) is bound by residues 14 to 19 (GAAGRM), Asp40, 106 to 108 (ATT), and 130 to 133 (APSM). The active-site Proton donor/acceptor is His166. (S)-2,3,4,5-tetrahydrodipicolinate is bound at residue His167. Lys170 functions as the Proton donor in the catalytic mechanism. 176-177 (GT) contributes to the (S)-2,3,4,5-tetrahydrodipicolinate binding site.

It belongs to the DapB family.

The protein localises to the cytoplasm. It catalyses the reaction (S)-2,3,4,5-tetrahydrodipicolinate + NAD(+) + H2O = (2S,4S)-4-hydroxy-2,3,4,5-tetrahydrodipicolinate + NADH + H(+). It carries out the reaction (S)-2,3,4,5-tetrahydrodipicolinate + NADP(+) + H2O = (2S,4S)-4-hydroxy-2,3,4,5-tetrahydrodipicolinate + NADPH + H(+). It functions in the pathway amino-acid biosynthesis; L-lysine biosynthesis via DAP pathway; (S)-tetrahydrodipicolinate from L-aspartate: step 4/4. Its function is as follows. Catalyzes the conversion of 4-hydroxy-tetrahydrodipicolinate (HTPA) to tetrahydrodipicolinate. The polypeptide is 4-hydroxy-tetrahydrodipicolinate reductase (Rhodopirellula baltica (strain DSM 10527 / NCIMB 13988 / SH1)).